The following is a 563-amino-acid chain: ATP-dependent RNA helicase DeaD (563 aa).

The short motif at 13–41 is the Q motif element; the sequence is ATFADLQIHPRVLRAIGDVGYESPTAIQA. The region spanning 44–215 is the Helicase ATP-binding domain; it reads IPALMAGSDV…AKYLHDPFEV (172 aa). Residue 57–64 coordinates ATP; sequence AQTGTGKT. Residues 163–166 carry the DEAD box motif; that stretch reads DEAD. Residues 226-385 enclose the Helicase C-terminal domain; the sequence is NISQSYIQVA…AQLPTVEDVN (160 aa). Disordered regions lie at residues 441–470 and 543–563; these read LMAP…PDLT and YRPP…KHVG. The span at 451 to 461 shows a compositional bias: basic and acidic residues; sequence RNRDQRRDRPQ. Positions 551 to 563 are enriched in basic residues; sequence RHNGGKPRRKHVG.

Belongs to the DEAD box helicase family. DeaD/CsdA subfamily.

The protein localises to the cytoplasm. The enzyme catalyses ATP + H2O = ADP + phosphate + H(+). DEAD-box RNA helicase involved in various cellular processes at low temperature, including ribosome biogenesis, mRNA degradation and translation initiation. In Mycobacterium tuberculosis (strain CDC 1551 / Oshkosh), this protein is ATP-dependent RNA helicase DeaD.